The primary structure comprises 796 residues: AUGMIN subunit 5 (796 aa).

The tract at residues 79–120 is disordered; it reads HGGSSNASIGSSVNPGKEESKSKGRRKDKTVTGESSSYAEDR. A compositionally biased stretch (polar residues) spans 80 to 92; it reads GGSSNASIGSSVN. Coiled-coil stretches lie at residues 115 to 191 and 462 to 501; these read SYAE…EATR and GKEREAAGLRASLNTLLSEIQRLNKLCAERKEAEDSLKKK.

The protein belongs to the HAUS5 family. Part of the augmin complex composed of 8 subunits. The complex acts on microtubules and interacts with gamma-tubulin in spindles and the phragmoplast.

The protein localises to the cytoplasm. It localises to the cytoskeleton. It is found in the spindle. Its subcellular location is the phragmoplast. Functionally, involved in microtubules reorganization during spindle and phragmoplast development. The protein is AUGMIN subunit 5 of Arabidopsis thaliana (Mouse-ear cress).